Reading from the N-terminus, the 347-residue chain is NADH-ubiquinone oxidoreductase chain 2 (347 aa).

10 helical membrane-spanning segments follow: residues 3–23 (PIVF…VMMS), 25–45 (HWLM…PILM), 59–79 (YFLT…INLM), 111–131 (FHFW…LILL), 149–169 (INLD…GWGG), 178–198 (IMAY…TYNP), 201–221 (TMLN…LLML), 242–262 (SLIL…GFIP), 274–294 (NSII…YFYL), and 325–345 (LLPT…TMSI).

It belongs to the complex I subunit 2 family. Core subunit of respiratory chain NADH dehydrogenase (Complex I) which is composed of 45 different subunits. Interacts with TMEM242.

The protein resides in the mitochondrion inner membrane. The catalysed reaction is a ubiquinone + NADH + 5 H(+)(in) = a ubiquinol + NAD(+) + 4 H(+)(out). Core subunit of the mitochondrial membrane respiratory chain NADH dehydrogenase (Complex I) which catalyzes electron transfer from NADH through the respiratory chain, using ubiquinone as an electron acceptor. Essential for the catalytic activity and assembly of complex I. The sequence is that of NADH-ubiquinone oxidoreductase chain 2 from Rhinoceros unicornis (Greater Indian rhinoceros).